A 224-amino-acid polypeptide reads, in one-letter code: Virulence transcriptional regulatory protein PhoP (224 aa).

The 115-residue stretch at 3–117 folds into the Response regulatory domain; that stretch reads RVLVVEDNAL…EVMARMQALM (115 aa). A 4-aspartylphosphate modification is found at Asp-52. The ompR/PhoB-type DNA-binding region spans 125–223; the sequence is SQVINIPPFQ…VRGQGYLFEL (99 aa).

Post-translationally, phosphorylated by PhoQ.

It localises to the cytoplasm. Member of the two-component regulatory system PhoQ/PhoP which regulates the expression of genes involved in virulence and resistance to host defense antimicrobial peptides. In Salmonella choleraesuis (strain SC-B67), this protein is Virulence transcriptional regulatory protein PhoP (phoP).